The primary structure comprises 316 residues: Coiled-coil domain-containing protein 42 (316 aa).

2 coiled-coil regions span residues 39–146 (SPSI…SAKL) and 178–232 (LVSM…DRAR).

It belongs to the CFAP73 family. In terms of assembly, interacts with ODF1 and ODF2. Interacts with CCDC38. Interacts with CCDC146. Interacts with CFAP53.

The protein localises to the cytoplasm. It is found in the perinuclear region. Its subcellular location is the cytoskeleton. It localises to the cell projection. The protein resides in the cilium. The protein localises to the flagellum. It is found in the microtubule organizing center. Its subcellular location is the centrosome. Functionally, essential for male fertility. Required for sperm development. The polypeptide is Coiled-coil domain-containing protein 42 (Homo sapiens (Human)).